The following is a 1610-amino-acid chain: Voltage-dependent L-type calcium channel subunit alpha-1D (1610 aa).

The interval 1-99 (MMMMMMKKMQ…SKKQGNSSNS (99 aa)) is disordered. The Cytoplasmic segment spans residues 1-125 (MMMMMMKKMQ…RACISIVEWK (125 aa)). Residues 37–51 (GPTSQPNSSKQTVLS) show a composition bias toward polar residues. The segment covering 53–66 (QAAIDAARQAKAAQ) has biased composition (low complexity). Basic residues predominate over residues 81–92 (QRKRQQYAKSKK). One copy of the I repeat lies at 112 to 408 (NPIRRACISI…LVLGVLSGEF (297 aa)). The chain crosses the membrane as a helical span at residues 126–144 (PFDIFILLAIFANCVALAI). Over 145-162 (YIPFPEDDSNSTNHNLEK) the chain is Extracellular. Residue Asn-154 is glycosylated (N-linked (GlcNAc...) asparagine). A helical transmembrane segment spans residues 163 to 182 (VEYAFLIIFTVETFLKIIAY). Over 183 to 194 (GLLLHPNAYVRN) the chain is Cytoplasmic. The helical transmembrane segment at 195–213 (GWNLLDFVIVIVGLFSVIL) threads the bilayer. Residues 214–234 (EQLTKETEGGNHSSGKSGGFD) are Extracellular-facing. Asn-224 is a glycosylation site (N-linked (GlcNAc...) asparagine). A helical membrane pass occupies residues 235–253 (VKALRAFRVLRPLRLVSGV). Over 254–272 (PSLQVVLNSIIKAMVPLLH) the chain is Cytoplasmic. Residues 273 to 292 (IALLVLFVIIIYAIIGLELF) traverse the membrane as a helical segment. Residues 293-380 (IGKMHKTCFF…WMNDAMGFEL (88 aa)) are Extracellular-facing. The N-linked (GlcNAc...) asparagine glycan is linked to Asn-328. Glu-363 contributes to the Ca(2+) binding site. A helical membrane pass occupies residues 381-405 (PWVYFVSLVIFGSFFVLNLVLGVLS). Topologically, residues 406-522 (GEFSKEREKA…RRCRAAVKSV (117 aa)) are cytoplasmic. The binding to the beta subunit stretch occupies residues 428-445 (EQLEEDLKGYLDWITQAE). The tract at residues 448 to 487 (DPENEEEGGEEGKRNTSMPTSETESVNTENVSGEGETQGS) is disordered. Over residues 462–487 (NTSMPTSETESVNTENVSGEGETQGS) the composition is skewed to polar residues. The stretch at 508–754 (NRFNRRRCRA…VFLAIAVDNL (247 aa)) is one II repeat. Residues 523-542 (TFYWLVIVLVFLNTLTISSE) traverse the membrane as a helical segment. Topologically, residues 543-557 (HYNQPDWLTQIQDIA) are extracellular. The chain crosses the membrane as a helical span at residues 558–576 (NKVLLALFTCEMLVKMYSL). The Cytoplasmic segment spans residues 577–584 (GLQAYFVS). The helical transmembrane segment at 585–603 (LFNRFDCFVVCGGITETIL) threads the bilayer. Residues 604-613 (VELELMSPLG) lie on the Extracellular side of the membrane. A helical membrane pass occupies residues 614–632 (VSVFRCVRLLRIFKVTRHW). Topologically, residues 633-651 (TSLSNLVASLLNSMKSIAS) are cytoplasmic. Residues 652–672 (LLLLLFLFIIIFSLLGMQLFG) traverse the membrane as a helical segment. The Extracellular segment spans residues 673–726 (GKFNFDETQTKRSTFDNFPQALLTVFQILTGEDWNAVMYDGIMAYGGPSSSGMI). Residue Glu-704 coordinates Ca(2+). The helical transmembrane segment at 727–751 (VCIYFIILFICGNYILLNVFLAIAV) threads the bilayer. At 752 to 884 (DNLADAESLN…VGCHKLINHH (133 aa)) the chain is on the cytoplasmic side. Positions 765-789 (KEEAEEKERKKIARKESLENKKNNK) are enriched in basic and acidic residues. The segment at 765-846 (KEEAEEKERK…VPAGPRPRRI (82 aa)) is disordered. Over residues 790–801 (PEVNQIANSDNK) the composition is skewed to polar residues. The segment covering 824 to 836 (VGEEEEEEEEEPE) has biased composition (acidic residues). Residues 871-1153 (NPIRVGCHKL…IFVGFVIVTF (283 aa)) form an III repeat. The chain crosses the membrane as a helical span at residues 885–903 (IFTNLILVFIMLSSAALAA). The Extracellular portion of the chain corresponds to 904–919 (EDPIRSHSFRNTILGY). The helical transmembrane segment at 920–939 (FDYAFTAIFTVEILLKMTTF) threads the bilayer. Over 940-951 (GAFLHKGAFCRN) the chain is Cytoplasmic. The helical transmembrane segment at 952-970 (YFNLLDMLVVGVSLVSFGI) threads the bilayer. Over 971-976 (QSSAIS) the chain is Extracellular. A helical transmembrane segment spans residues 977-996 (VVKILRVLRVLRPLRAINRA). The Cytoplasmic segment spans residues 997 to 1015 (KGLKHVVQCVFVAIRTIGN). The helical transmembrane segment at 1016–1035 (IMIVTTLLQFMFACIGVQLF) threads the bilayer. The Extracellular segment spans residues 1036–1125 (KGKFYRCTDE…AGPVYNHRVE (90 aa)). Residues 1073 to 1163 (RIWQNSDFNF…QEQGEKEYKN (91 aa)) are dihydropyridine binding. Glu-1099 serves as a coordination point for Ca(2+). The chain crosses the membrane as a helical span at residues 1126 to 1146 (ISIFFIIYIIIVAFFMMNIFV). Residues 1147–1203 (GFVIVTFQEQGEKEYKNCELDKNQRQCVEYALKARPLRRYIPKNPYQYKFWYVVNSS) are Cytoplasmic-facing. Residues 1190-1465 (NPYQYKFWYV…LFVAVIMDNF (276 aa)) form an IV repeat. Residues 1204-1222 (PFEYMMFVLIMLNTLCLAM) form a helical membrane-spanning segment. The Extracellular segment spans residues 1223–1237 (QHYEQSKMFNDAMDI). The helical transmembrane segment at 1238 to 1257 (LNMVFTGVFTVEMVLKVIAF) threads the bilayer. Over 1258–1264 (KPKGYFS) the chain is Cytoplasmic. A helical transmembrane segment spans residues 1265 to 1286 (DAWNTFDSLIVIGSIIDVALSE). Over 1287 to 1311 (ADPTESESLPLPTATPGNSEESNRI) the chain is Extracellular. A helical transmembrane segment spans residues 1312-1331 (SITFFRLFRVMRLVKLLSRG). Topologically, residues 1332–1350 (EGIRTLLWTFIKSFQALPY) are cytoplasmic. A helical membrane pass occupies residues 1351–1370 (VALLIAMLFFIYAVIGMQMF). Residues 1371-1437 (GKVAMRDNNQ…GEEYTCGSNF (67 aa)) are Extracellular-facing. Residues 1418-1484 (LCDPDSDYNP…LGPHHLDEFK (67 aa)) are dihydropyridine binding. Positions 1430–1473 (EYTCGSNFAIVYFISFYMLCAFLIINLFVAVIMDNFDYLTRDWS) are phenylalkylamine binding. A helical transmembrane segment spans residues 1438-1462 (AIVYFISFYMLCAFLIINLFVAVIM). At 1463-1610 (DNFDYLTRDW…CFLSPSRSRS (148 aa)) the chain is on the cytoplasmic side.

Belongs to the calcium channel alpha-1 subunit (TC 1.A.1.11) family. CACNA1D subfamily. Voltage-dependent calcium channels are multisubunit complexes, consisting of alpha-1, alpha-2, beta and delta subunits in a 1:1:1:1 ratio. The channel activity is directed by the pore-forming and voltage-sensitive alpha-1 subunit. In many cases, this subunit is sufficient to generate voltage-sensitive calcium channel activity. The auxiliary subunits beta and alpha-2/delta linked by a disulfide bridge regulate the channel activity. Interacts with RIMBP2. Interacts with CABP1 and CABP4, resulting in a near elimination of calcium-dependent inactivation of the channel. Expressed in brain, heart and skeletal muscle.

The protein localises to the membrane. It carries out the reaction Ca(2+)(in) = Ca(2+)(out). Voltage-sensitive calcium channels (VSCC) mediate the entry of calcium ions into excitable cells and are also involved in a variety of calcium-dependent processes, including muscle contraction, hormone or neurotransmitter release, gene expression, cell motility, cell division and cell death. The isoform alpha-1D gives rise to L-type calcium currents. Long-lasting (L-type) calcium channels belong to the 'high-voltage activated' (HVA) group. They are blocked by dihydropyridines (DHP), phenylalkylamines, and by benzothiazepines. The protein is Voltage-dependent L-type calcium channel subunit alpha-1D (CACNA1D) of Mesocricetus auratus (Golden hamster).